We begin with the raw amino-acid sequence, 88 residues long: uncharacterized protein (88 aa).

The signal sequence occupies residues 1–22 (MGLTLKEHAEVCMALAESSASA).

This is an uncharacterized protein from Haemophilus influenzae (strain ATCC 51907 / DSM 11121 / KW20 / Rd).